The primary structure comprises 132 residues: Fatty acid-binding protein type 2 (132 aa).

Residue Ala-2 is modified to N-acetylalanine.

The protein belongs to the calycin superfamily. Fatty-acid binding protein (FABP) family.

In Fasciola hepatica (Liver fluke), this protein is Fatty acid-binding protein type 2.